The sequence spans 751 residues: Dendritic arbor reduction protein 1 (751 aa).

Positions 57-89 (NNNNTSSNNNHSSNSSSNNSNGSQTPNGNNNSS) are enriched in low complexity. Disordered regions lie at residues 57–167 (NNNN…PNSN), 248–275 (LMLSSSGSSNNNGSSNSSSNTGESATSQ), 304–351 (TEKQ…QQHL), 374–410 (LQQQHQQQQHLQHNNSSSSSPKLATPGDNSGNTSSYQ), 458–578 (SATA…AATG), and 594–639 (SAIQ…AAHI). The segment covering 95–125 (HQHHQFHHHLHHHHSHQHHHQHHHLHQHHSH) has biased composition (basic residues). Polar residues predominate over residues 153-167 (AQQQQLQPAGSPNSN). Low complexity-rich tracts occupy residues 251-267 (SSSGSSNNNGSSNSSSN), 309-351 (RQQQ…QQHL), and 374-393 (LQQQHQQQQHLQHNNSSSSS). Residues 400–410 (GDNSGNTSSYQ) are compositionally biased toward polar residues. 3 stretches are compositionally biased toward low complexity: residues 458–513 (SATA…SSAS), 527–548 (DPGSPGSSMVAAAAAAAAQRRT), and 594–610 (SAIQQQQQQPQQQQVPQ). 3 consecutive C2H2-type zinc fingers follow at residues 664-688 (HHCDFVGCSKVYTKSSHLKAHQRIH), 694-718 (YTCQWPECEWRFARSDELTRHYRKH), and 724-746 (FKCIVCERSFARSDHLALHMKRH).

This sequence belongs to the krueppel C2H2-type zinc-finger protein family. In terms of tissue distribution, highly enriched in the peripheral nervous system but is absent from the central nervous system. Expressed in neurons with more than one dendrite including da neurons, bd neurons and the dmd1 neuron but undetectable in neurons with single dendrites such as external sensory organ neurons and chodonotal neurons.

The protein resides in the nucleus. In terms of biological role, transcriptional regulator which promotes dendrite growth by suppressing, either directly or indirectly, the expression of the microtubule-severing protein spas. Determines multipolar neuron morphology in postmitotic neurons by positively regulating the expression of genes involved in nuclear positioning including several dynein genes and the nuclear migration protein nudC. The sequence is that of Dendritic arbor reduction protein 1 from Drosophila melanogaster (Fruit fly).